We begin with the raw amino-acid sequence, 297 residues long: tRNA pseudouridine synthase B (297 aa).

D39 functions as the Nucleophile in the catalytic mechanism.

The protein belongs to the pseudouridine synthase TruB family. Type 1 subfamily.

It catalyses the reaction uridine(55) in tRNA = pseudouridine(55) in tRNA. In terms of biological role, responsible for synthesis of pseudouridine from uracil-55 in the psi GC loop of transfer RNAs. The chain is tRNA pseudouridine synthase B from Lactobacillus acidophilus (strain ATCC 700396 / NCK56 / N2 / NCFM).